We begin with the raw amino-acid sequence, 763 residues long: Phosphoglycerol transferase I (763 aa).

The next 4 membrane-spanning stretches (helical) occupy residues 1–21 (MSEL…AWKA), 26–46 (WWFA…ITLF), 77–97 (ILPG…LGWI), and 108–128 (FGYS…SPAF).

Belongs to the OpgB family.

The protein resides in the cell inner membrane. It carries out the reaction a phosphatidylglycerol + a membrane-derived-oligosaccharide D-glucose = a 1,2-diacyl-sn-glycerol + a membrane-derived-oligosaccharide 6-(glycerophospho)-D-glucose.. It participates in glycan metabolism; osmoregulated periplasmic glucan (OPG) biosynthesis. Transfers a phosphoglycerol residue from phosphatidylglycerol to the membrane-bound nascent glucan backbones. The sequence is that of Phosphoglycerol transferase I from Escherichia coli (strain 55989 / EAEC).